Reading from the N-terminus, the 271-residue chain is Regulatory protein RecX (271 aa).

The protein belongs to the RecX family.

It is found in the cytoplasm. Its function is as follows. Modulates RecA activity. The sequence is that of Regulatory protein RecX from Lactobacillus delbrueckii subsp. bulgaricus (strain ATCC BAA-365 / Lb-18).